A 580-amino-acid chain; its full sequence is Negative elongation factor B (580 aa).

Lys-519 bears the N6-acetyllysine mark. The interval Asp-552–Leu-580 is disordered. Ser-557 bears the Phosphoserine mark.

The protein belongs to the NELF-B family. As to quaternary structure, the NELF complex is composed of NELFA, NELFB, NELFCD and NELFE; the N-terminus of NELFB binds to the NELFA:NELFCD subcomplex. Binds RNA which may help to stabilize the NELF complex on nucleic acid Interacts with the first BRCT repeat of BRCA1. Interacts with KIAA1191. Isoform 1 and isoform 2 interact with NELFA, NELFCD and NELFE. Isoform 1 is expressed in the kidney, liver, adipose and lung. Isoform 2 is widely expressed.

The protein localises to the nucleus. Functionally, essential component of the NELF complex, a complex that negatively regulates the elongation of transcription by RNA polymerase II (Pol II). The NELF complex, which acts via an association with the DSIF complex and causes transcriptional pausing, is counteracted by the P-TEFb kinase complex. May be able to induce chromatin unfolding. Essential for early embryogenesis; plays an important role in maintaining the undifferentiated state of embryonic stem cells (ESCs) by preventing unscheduled expression of developmental genes. Plays a key role in establishing the responsiveness of stem cells to developmental cues; facilitates plasticity and cell fate commitment in ESCs by establishing the appropriate expression level of signaling molecules. Supports the transcription of genes involved in energy metabolism in cardiomyocytes; facilitates the association of transcription initiation factors with the promoters of the metabolism-related genes. This is Negative elongation factor B (Nelfb) from Mus musculus (Mouse).